The sequence spans 537 residues: Chaperonin GroEL (537 aa).

Residues 29-32, 86-90, Gly-413, and Asp-492 each bind ATP; these read TLGP and DGTTT.

It belongs to the chaperonin (HSP60) family. Forms a cylinder of 14 subunits composed of two heptameric rings stacked back-to-back. Interacts with the co-chaperonin GroES.

It localises to the cytoplasm. It carries out the reaction ATP + H2O + a folded polypeptide = ADP + phosphate + an unfolded polypeptide.. Functionally, together with its co-chaperonin GroES, plays an essential role in assisting protein folding. The GroEL-GroES system forms a nano-cage that allows encapsulation of the non-native substrate proteins and provides a physical environment optimized to promote and accelerate protein folding. In Dehalococcoides mccartyi (strain CBDB1), this protein is Chaperonin GroEL.